The following is a 603-amino-acid chain: NADH-ubiquinone oxidoreductase chain 5 (603 aa).

The next 16 helical transmembrane spans lie at 4–24, 36–56, 87–107, 114–134, 137–157, 171–191, 200–220, 241–261, 272–292, 301–320, 325–347, 366–386, 407–429, 457–477, 482–502, and 583–603; these read YTTM…ATLI, VKMT…MFMC, MMFI…SLWY, INQF…LVTA, LFQL…LIGW, AILY…WFLL, QMIL…LLAA, TPVS…FLLI, LIQT…AICA, IVAF…IGIN, AFLH…GSII, LPLT…MPFL, WALS…MILL, LTIG…PTSP, IPLY…LTAF, and MIKL…LLIM.

The protein belongs to the complex I subunit 5 family. As to quaternary structure, core subunit of respiratory chain NADH dehydrogenase (Complex I) which is composed of 45 different subunits.

It is found in the mitochondrion inner membrane. It catalyses the reaction a ubiquinone + NADH + 5 H(+)(in) = a ubiquinol + NAD(+) + 4 H(+)(out). In terms of biological role, core subunit of the mitochondrial membrane respiratory chain NADH dehydrogenase (Complex I) which catalyzes electron transfer from NADH through the respiratory chain, using ubiquinone as an electron acceptor. Essential for the catalytic activity and assembly of complex I. This Hylobates lar (Lar gibbon) protein is NADH-ubiquinone oxidoreductase chain 5 (MT-ND5).